A 299-amino-acid polypeptide reads, in one-letter code: MDIVEEILKLKEERNAVILAHNYQLPEVQDIADFIGDSLELARKATKVDADVIVFAGVDFMAETAKILNPDKTVLLPSRRATCAMANMLKVEHIIEAKRKYPNAPVVLYVNSTAETKAYADVTVTSANAVKIVSKLDADVVIFGPDKNLAHYVAKMTGKKVIPVPPNGHCYVHQKFTIEDVERAKKLYPNAKLMVHPECIPEVQEKADIIVSTGGMIKNACLHDEWVVFTEREMVYRLKKLYPEKKFYPAREDAICIGMKAITLKHIYESLRDMKYKVEVPRDIAEKARRAIERMLEMS.

Iminosuccinate-binding residues include His-21 and Ser-38. Residue Cys-83 coordinates [4Fe-4S] cluster. Residues 109-111 (YVN) and Ser-126 each bind iminosuccinate. Cys-170 lines the [4Fe-4S] cluster pocket. Iminosuccinate is bound by residues 196–198 (HPE) and Thr-213. Residue Cys-256 participates in [4Fe-4S] cluster binding.

This sequence belongs to the quinolinate synthase family. Type 2 subfamily. [4Fe-4S] cluster is required as a cofactor.

Its subcellular location is the cytoplasm. The catalysed reaction is iminosuccinate + dihydroxyacetone phosphate = quinolinate + phosphate + 2 H2O + H(+). The protein operates within cofactor biosynthesis; NAD(+) biosynthesis; quinolinate from iminoaspartate: step 1/1. Catalyzes the condensation of iminoaspartate with dihydroxyacetone phosphate to form quinolinate. The sequence is that of Quinolinate synthase from Pyrococcus abyssi (strain GE5 / Orsay).